Reading from the N-terminus, the 267-residue chain is Formamidopyrimidine-DNA glycosylase (267 aa).

The Schiff-base intermediate with DNA role is filled by P2. Catalysis depends on E3, which acts as the Proton donor. K53 acts as the Proton donor; for beta-elimination activity in catalysis. The DNA site is built by H82 and R100. The FPG-type zinc finger occupies 230–264; the sequence is AVYGREGLPCPACGRPVERRVVAGRGTHFCPTCQG. R254 functions as the Proton donor; for delta-elimination activity in the catalytic mechanism.

Belongs to the FPG family. In terms of assembly, monomer. The cofactor is Zn(2+).

It carries out the reaction Hydrolysis of DNA containing ring-opened 7-methylguanine residues, releasing 2,6-diamino-4-hydroxy-5-(N-methyl)formamidopyrimidine.. The catalysed reaction is 2'-deoxyribonucleotide-(2'-deoxyribose 5'-phosphate)-2'-deoxyribonucleotide-DNA = a 3'-end 2'-deoxyribonucleotide-(2,3-dehydro-2,3-deoxyribose 5'-phosphate)-DNA + a 5'-end 5'-phospho-2'-deoxyribonucleoside-DNA + H(+). In terms of biological role, involved in base excision repair of DNA damaged by oxidation or by mutagenic agents. Acts as a DNA glycosylase that recognizes and removes damaged bases. Has a preference for oxidized purines, such as 7,8-dihydro-8-oxoguanine (8-oxoG). Has AP (apurinic/apyrimidinic) lyase activity and introduces nicks in the DNA strand. Cleaves the DNA backbone by beta-delta elimination to generate a single-strand break at the site of the removed base with both 3'- and 5'-phosphates. The protein is Formamidopyrimidine-DNA glycosylase of Thermus thermophilus (strain ATCC BAA-163 / DSM 7039 / HB27).